Reading from the N-terminus, the 365-residue chain is DNA polymerase IV (365 aa).

In terms of domain architecture, UmuC spans 7–188 (IIHIDMDAFY…LPVNKFFGVG (182 aa)). Mg(2+) contacts are provided by Asp11 and Asp106. Glu107 is an active-site residue.

The protein belongs to the DNA polymerase type-Y family. As to quaternary structure, monomer. Mg(2+) serves as cofactor.

Its subcellular location is the cytoplasm. It carries out the reaction DNA(n) + a 2'-deoxyribonucleoside 5'-triphosphate = DNA(n+1) + diphosphate. Its function is as follows. Poorly processive, error-prone DNA polymerase involved in untargeted mutagenesis. Copies undamaged DNA at stalled replication forks, which arise in vivo from mismatched or misaligned primer ends. These misaligned primers can be extended by PolIV. Exhibits no 3'-5' exonuclease (proofreading) activity. May be involved in translesional synthesis, in conjunction with the beta clamp from PolIII. The chain is DNA polymerase IV from Clostridioides difficile (strain 630) (Peptoclostridium difficile).